The sequence spans 344 residues: Acireductone dioxygenase (344 aa).

Histidine 92, histidine 94, glutamate 98, and histidine 137 together coordinate Fe(2+). Ni(2+) is bound by residues histidine 92, histidine 94, glutamate 98, and histidine 137.

Belongs to the acireductone dioxygenase (ARD) family. The cofactor is Fe(2+). Ni(2+) serves as cofactor.

The protein resides in the cytoplasm. The protein localises to the nucleus. The enzyme catalyses 1,2-dihydroxy-5-(methylsulfanyl)pent-1-en-3-one + O2 = 4-methylsulfanyl-2-oxobutanoate + formate + 2 H(+). It carries out the reaction 1,2-dihydroxy-5-(methylsulfanyl)pent-1-en-3-one + O2 = 3-(methylsulfanyl)propanoate + CO + formate + 2 H(+). The protein operates within amino-acid biosynthesis; L-methionine biosynthesis via salvage pathway; L-methionine from S-methyl-5-thio-alpha-D-ribose 1-phosphate: step 5/6. In terms of biological role, catalyzes 2 different reactions between oxygen and the acireductone 1,2-dihydroxy-3-keto-5-methylthiopentene (DHK-MTPene) depending upon the metal bound in the active site. Fe-containing acireductone dioxygenase (Fe-ARD) produces formate and 2-keto-4-methylthiobutyrate (KMTB), the alpha-ketoacid precursor of methionine in the methionine recycle pathway. Ni-containing acireductone dioxygenase (Ni-ARD) produces methylthiopropionate, carbon monoxide and formate, and does not lie on the methionine recycle pathway. This Leishmania braziliensis protein is Acireductone dioxygenase.